The following is a 149-amino-acid chain: Internal scaffolding protein ORF3 (149 aa).

This sequence belongs to the microvidae B protein family.

The protein resides in the host cytoplasm. Functionally, participates in the assembly of the viral procapsid in the cytoplasm. Released from the procapsid upon genome packaging, possibly through affinity displacement by the protein ORF8, or by proteolysis. This chain is Internal scaffolding protein ORF3, found in Spiroplasma virus 4 (SpV4).